We begin with the raw amino-acid sequence, 124 residues long: Large ribosomal subunit protein bL12 (124 aa).

Belongs to the bacterial ribosomal protein bL12 family. As to quaternary structure, homodimer. Part of the ribosomal stalk of the 50S ribosomal subunit. Forms a multimeric L10(L12)X complex, where L10 forms an elongated spine to which 2 to 4 L12 dimers bind in a sequential fashion. Binds GTP-bound translation factors.

Its function is as follows. Forms part of the ribosomal stalk which helps the ribosome interact with GTP-bound translation factors. Is thus essential for accurate translation. The protein is Large ribosomal subunit protein bL12 of Burkholderia ambifaria (strain MC40-6).